We begin with the raw amino-acid sequence, 227 residues long: Uracil-DNA glycosylase 2 (227 aa).

Residue aspartate 67 is the Proton acceptor of the active site.

It belongs to the uracil-DNA glycosylase (UDG) superfamily. UNG family.

The protein resides in the cytoplasm. It carries out the reaction Hydrolyzes single-stranded DNA or mismatched double-stranded DNA and polynucleotides, releasing free uracil.. In terms of biological role, excises uracil residues from the DNA which can arise as a result of misincorporation of dUMP residues by DNA polymerase or due to deamination of cytosine. In Streptomyces coelicolor (strain ATCC BAA-471 / A3(2) / M145), this protein is Uracil-DNA glycosylase 2 (ung2).